We begin with the raw amino-acid sequence, 473 residues long: Ribulose bisphosphate carboxylase large chain 1 (473 aa).

2 residues coordinate substrate: Asn-116 and Thr-166. Lys-168 acts as the Proton acceptor in catalysis. Lys-170 provides a ligand contact to substrate. Lys-194, Asp-196, and Glu-197 together coordinate Mg(2+). Residue Lys-194 is modified to N6-carboxylysine. His-287 acts as the Proton acceptor in catalysis. Residues Arg-288, His-320, and Ser-372 each contribute to the substrate site.

Belongs to the RuBisCO large chain family. Type I subfamily. Heterohexadecamer of 8 large chains and 8 small chains. Mg(2+) is required as a cofactor.

The catalysed reaction is 2 (2R)-3-phosphoglycerate + 2 H(+) = D-ribulose 1,5-bisphosphate + CO2 + H2O. It catalyses the reaction D-ribulose 1,5-bisphosphate + O2 = 2-phosphoglycolate + (2R)-3-phosphoglycerate + 2 H(+). RuBisCO catalyzes two reactions: the carboxylation of D-ribulose 1,5-bisphosphate, the primary event in carbon dioxide fixation, as well as the oxidative fragmentation of the pentose substrate. Both reactions occur simultaneously and in competition at the same active site. This is Ribulose bisphosphate carboxylase large chain 1 from Acidithiobacillus ferrooxidans (strain ATCC 23270 / DSM 14882 / CIP 104768 / NCIMB 8455) (Ferrobacillus ferrooxidans (strain ATCC 23270)).